The following is a 346-amino-acid chain: Heat-inducible transcription repressor HrcA (346 aa).

It belongs to the HrcA family.

Negative regulator of class I heat shock genes (grpE-dnaK-dnaJ and groELS operons). Prevents heat-shock induction of these operons. The sequence is that of Heat-inducible transcription repressor HrcA from Fructilactobacillus sanfranciscensis (Lactobacillus sanfranciscensis).